The chain runs to 145 residues: Probable WRKY transcription factor 75 (145 aa).

Over residues 20 to 38 (SKPELHQGEEESSKVRSEG) the composition is skewed to basic and acidic residues. The disordered stretch occupies residues 20-55 (SKPELHQGEEESSKVRSEGCSKSVESSKKKGKKQRY). A DNA-binding region (WRKY) is located at residues 61 to 126 (SQVDILDDGY…YEGVHSHPIE (66 aa)).

It belongs to the WRKY group II-c family.

The protein resides in the nucleus. Functionally, transcription factor. Interacts specifically with the W box (5'-(T)TGAC[CT]-3'), a frequently occurring elicitor-responsive cis-acting element. The polypeptide is Probable WRKY transcription factor 75 (WRKY75) (Arabidopsis thaliana (Mouse-ear cress)).